The sequence spans 500 residues: Cytochrome P450 71B34 (500 aa).

Residues 1–21 (MTNIWLLSLIFVICILVAVFN) form a helical membrane-spanning segment. A heme-binding site is contributed by C440.

Belongs to the cytochrome P450 family. Requires heme as cofactor.

The protein resides in the membrane. This Arabidopsis thaliana (Mouse-ear cress) protein is Cytochrome P450 71B34 (CYP71B34).